Here is a 935-residue protein sequence, read N- to C-terminus: Myocardin (935 aa).

The MEF2C-binding motif lies at 12–27 (IRRKFRSVLQLRLQQR). 3 RPEL repeats span residues 18 to 43 (SVLQ…PPLK), 62 to 87 (DSLR…QAST), and 106 to 131 (DDLN…PMDS). Residues 37–73 (GLIPPLKGPTEFHDPRKQLDSAKTEDSLRRKGRNRSD) are disordered. Residues 46–73 (TEFHDPRKQLDSAKTEDSLRRKGRNRSD) show a composition bias toward basic and acidic residues. Residues 153-201 (FEDDSSRDGLSPDQARSEDPQGSTGSTPDIKSTEAPLDTIQDLTPGSES) form an HDAC5-binding region. The interval 155–283 (DDSSRDGLSP…SPPPMDSAYA (129 aa)) is disordered. Composition is skewed to polar residues over residues 172–182 (PQGSTGSTPDI) and 206–216 (AASQPGNQSDP). Residues 244 to 261 (NRHKKPKDPKPKVKKLKY) are compositionally biased toward basic residues. A coiled-coil region spans residues 287 to 322 (QQQQLFLQLQILSQQQQQQQQQQQQQQQQQQQQQRF). Residues 337-378 (EQMARNPNPSSTPLSNTPLSPVKNSISGQTGVSSLKPGPLPP) are disordered. Over residues 342–357 (NPNPSSTPLSNTPLSP) the composition is skewed to low complexity. Residues 358–369 (VKNSISGQTGVS) show a composition bias toward polar residues. Positions 380 to 414 (LDDLKVSELRQQLRIRGLPVSGTKTALVDRLRPFQ) constitute an SAP domain. A phosphoserine; by GSK3-beta mark is found at serine 454, serine 458, serine 462, and serine 466. Residues 498 to 518 (ESLLSSLNGGSGPSEPDGLDS) are disordered. Residues 519–563 (EKDKMLVEKQKVINQLTWKLRQEQRQVEELRMQLQKQKSSCSDQK) are a coiled coil. Positions 579–605 (SCPFAPQQASGKGQGHSSDSPPPACET) are disordered. Residues 585 to 597 (QQASGKGQGHSSD) are compositionally biased toward polar residues. Serine 624, serine 628, serine 632, and serine 636 each carry phosphoserine; by GSK3-beta. The disordered stretch occupies residues 654 to 731 (NNHYFLASSS…DAVKQQMTRS (78 aa)). Polar residues predominate over residues 660-691 (ASSSGAQRENHGVSSPSSSQGCAQMTGLQSSD). Over residues 695–709 (PTFSIPSPTFSKSSS) the composition is skewed to low complexity. Residues 714–935 (ITQPPSYEDA…SPMDLHLQQW (222 aa)) are required for interaction with and ubiquitination by STUB1. Residues serine 812, serine 859, and serine 866 each carry the phosphoserine; by MAPK1 and MAPK3 modification. Threonine 893 bears the Phosphothreonine; by MAPK1 and MAPK3 mark.

As to quaternary structure, homodimer. Interacts with MLLT7/FOXO4. Interacts with SRF, its association does not depend on specific DNA sequences for ternary complex formation. Interacts (via C-terminal) with EP300 (via CREB-binding domain). Interacts with HDAC4 and HDAC5. Interacts with MEF2C. Interacts (via C-terminus) with STUB1/CHIP. Interacts with PURB. Ubiquitinated; by STUB1/CHIP at the C-terminus, leading to its degradation by the proteasome. Phosphorylation by GSK3B is required for STUB1/CHIP-mediated ubiquitination. In terms of processing, phosphorylation negatively regulates transcriptional activity. Phosphorylated; by GSK3B. In terms of tissue distribution, expressed in smooth muscle cell-containing tissues. Expressed in the heart. Expressed in the aorta and bladder. Weakly expression in the lung, testis and kidney. Weakly expressed in the stomach. Weakly expressed in the intestine and colon. As to expression, expressed in the heart. Predominantly expressed in cardiac muscle. In terms of tissue distribution, predominantly expressed in smooth muscle cell-rich tissues.

The protein localises to the nucleus speckle. Its function is as follows. Smooth muscle cells (SM) and cardiac muscle cells-specific transcriptional factor which uses the canonical single or multiple CArG boxes DNA sequence. Acts as a cofactor of serum response factor (SRF) with the potential to modulate SRF-target genes. Plays a crucial role in cardiogenesis, urinary bladder development, and differentiation of the smooth muscle cell lineage (myogenesis). Positively regulates the transcription of genes involved in vascular smooth muscle contraction. Functionally, positively regulates the activation of smooth muscle cell gene promoter regions. Positively regulates the activation of smooth muscle cell gene promoter regions. Activation of the MYH6 promoter is enhanced in the presence of MEF2C. This chain is Myocardin (Myocd), found in Mus musculus (Mouse).